Reading from the N-terminus, the 434-residue chain is UDP-N-acetylglucosamine 1-carboxyvinyltransferase (434 aa).

22–23 (KN) serves as a coordination point for phosphoenolpyruvate. Residue R97 coordinates UDP-N-acetyl-alpha-D-glucosamine. D121 functions as the Proton donor in the catalytic mechanism. D319 and M341 together coordinate UDP-N-acetyl-alpha-D-glucosamine.

The protein belongs to the EPSP synthase family. MurA subfamily.

It localises to the cytoplasm. It carries out the reaction phosphoenolpyruvate + UDP-N-acetyl-alpha-D-glucosamine = UDP-N-acetyl-3-O-(1-carboxyvinyl)-alpha-D-glucosamine + phosphate. Its pathway is cell wall biogenesis; peptidoglycan biosynthesis. Its function is as follows. Cell wall formation. Adds enolpyruvyl to UDP-N-acetylglucosamine. The protein is UDP-N-acetylglucosamine 1-carboxyvinyltransferase of Porphyromonas gingivalis (strain ATCC BAA-308 / W83).